Consider the following 759-residue polypeptide: Tripartite motif-containing protein 46 (759 aa).

A required for proximal axon localization, axon formation and migration region spans residues 1–166 (MAEGEDMQTF…VERYRQSVSV (166 aa)). The segment at 33–59 (CPVCQEMYKQPLVLPCTHNVCQACARE) adopts an RING-type 1; degenerate zinc-finger fold. The segment at 67–98 (IGHGGDPSSEPTSPASTPSTRSPRLSRRTLPK) is disordered. Residues 73 to 89 (PSSEPTSPASTPSTRSP) are compositionally biased toward low complexity. An RING-type 2; degenerate zinc finger spans residues 172–231 (CQLCKPPPLEATKGCSECRATFCNECFKLFHPWGTQKAQHEPTLPTLSFRPKGLMCPDHK). Residues 222–263 (PKGLMCPDHKEEVTHYCKTCQRLVCQLCRVRRTHSGHKITPV) form a B box-type zinc finger. Residues cysteine 227, histidine 230, cysteine 249, and histidine 255 each contribute to the Zn(2+) site. Positions 294–400 (ELEETIRHTE…RATEALQTFR (107 aa)) form a coiled coil. Phosphoserine is present on serine 330. A COS domain is found at 370-427 (LKETDQPCFVQAAKQLHNRIARATEALQTFRPAASSSFRHCQLDVGREMKLLTELNFL). The required for microtubule association, proximal axon localization and axon formation stretch occupies residues 411–429 (QLDVGREMKLLTELNFLRV). The region spanning 429–528 (VPEAPVIDTQ…EDVHLHTPPA (100 aa)) is the Fibronectin type-III domain. One can recognise a B30.2/SPRY domain in the interval 513–747 (GYGEYSEDVH…LQEPVGTKPE (235 aa)). Serine 627 carries the phosphoserine modification.

Belongs to the TRIM/RBCC family. As to quaternary structure, interacts with TUBB3 and TUBA4A. As to expression, expressed in primary hippocampal and cortical neurons.

The protein resides in the cell projection. It localises to the axon. The protein localises to the cytoplasm. Its subcellular location is the cytoskeleton. Its function is as follows. Microtubule-associated protein that is involved in the formation of parallel microtubule bundles linked by cross-bridges in the proximal axon. Required for the uniform orientation and maintenance of the parallel microtubule fascicles, which are important for efficient cargo delivery and trafficking in axons. Thereby also required for proper axon specification, the establishment of neuronal polarity and proper neuronal migration. In Rattus norvegicus (Rat), this protein is Tripartite motif-containing protein 46.